The sequence spans 41 residues: uncharacterized protein (41 aa).

The signal sequence occupies residues 1–23; that stretch reads MNFLMRAIFSLLLLFTLSIPVIS.

This is an uncharacterized protein from Escherichia coli (strain K12).